Here is a 410-residue protein sequence, read N- to C-terminus: MSDYEPLRLHVPEPTGRPGCKTDFSYLHLSPAGEVRKPPVDVEPAETSDLAYSLVRVLDDDGHAVGPWNPQLSNEQLLRGMRAMLKTRLFDARMLTAQRQKKLSFYMQCLGEEAIATAHTLALRDGDMCFPTYRQQGILITREYPLVDMICQLLSNEADPLKGRQLPIMYSSKEAGFFSISGNLATQFIQAVGWGMASAIKGDTRIASAWIGDGATAESDFHTALTFAHVYRAPVILNVVNNQWAISTFQAIAGGEGTTFANRGVGCGIASLRVDGNDFLAVYAASEWAAERARRNLGPSLIEWVTYRAGPHSTSDDPSKYRPADDWTNFPLGDPIARLKRHMIGLGIWSEEQHEATHKALEAEVLAAQKQAESHGTLIDGRVPSAASMFEDVYAELPEHLRRQRQELGV.

It belongs to the BCKDHA family. As to quaternary structure, heterodimer of an alpha and a beta chain. The cofactor is thiamine diphosphate.

The catalysed reaction is N(6)-[(R)-lipoyl]-L-lysyl-[protein] + 3-methyl-2-oxobutanoate + H(+) = N(6)-[(R)-S(8)-2-methylpropanoyldihydrolipoyl]-L-lysyl-[protein] + CO2. In terms of biological role, the branched-chain alpha-keto dehydrogenase complex catalyzes the overall conversion of alpha-keto acids to acyl-CoA and CO(2). It contains multiple copies of three enzymatic components: branched-chain alpha-keto acid decarboxylase (E1), lipoamide acyltransferase (E2) and lipoamide dehydrogenase (E3). This is 2-oxoisovalerate dehydrogenase subunit alpha (bkdA1) from Pseudomonas aeruginosa (strain ATCC 15692 / DSM 22644 / CIP 104116 / JCM 14847 / LMG 12228 / 1C / PRS 101 / PAO1).